We begin with the raw amino-acid sequence, 213 residues long: Ribonuclease HII (213 aa).

The RNase H type-2 domain occupies 18 to 213; that stretch reads GLYAGVDEVG…RPVKERLAKN (196 aa). The a divalent metal cation site is built by D24, E25, and D116.

This sequence belongs to the RNase HII family. Mn(2+) serves as cofactor. It depends on Mg(2+) as a cofactor.

It is found in the cytoplasm. It catalyses the reaction Endonucleolytic cleavage to 5'-phosphomonoester.. Its function is as follows. Endonuclease that specifically degrades the RNA of RNA-DNA hybrids. This Shewanella sediminis (strain HAW-EB3) protein is Ribonuclease HII.